The sequence spans 191 residues: Cytochrome b-245 light chain (191 aa).

The Cytoplasmic portion of the chain corresponds to 2–7 (GQIEWA). A helical transmembrane segment spans residues 8 to 30 (MWANEQALASGLILITGGIVATA). At 31 to 35 (GQFTQ) the chain is on the extracellular side. A helical transmembrane segment spans residues 36 to 53 (WYLGAYSIAAGVLVCLLE). Over 54-69 (YPRGKRSKGSTMERCG) the chain is Cytoplasmic. An intramembrane segment occupies 70 to 80 (QKYLTRVVKLF). Over 81 to 86 (GPLTRN) the chain is Cytoplasmic. The helical transmembrane segment at 87 to 104 (YYIRAFLHLGLAVPAGFL) threads the bilayer. Leu-105 is a topological domain (extracellular). The helical transmembrane segment at 106–126 (ATILGTACLAIASGIYLLAAI) threads the bilayer. Residues 127–191 (RGEQWSPIEP…NPMPVNDEVV (65 aa)) lie on the Cytoplasmic side of the membrane. Residues 134 to 191 (IEPKPKERPQIGGTIKQPPSNPPPRPPAEARKKLSEEAAGVPTGGPQENPMPVNDEVV) are disordered. Thr-147 bears the Phosphothreonine mark. Lys-149 is covalently cross-linked (Glycyl lysine isopeptide (Lys-Gly) (interchain with G-Cter in ubiquitin)). Ser-168 carries the post-translational modification Phosphoserine.

This sequence belongs to the p22phox family. In terms of assembly, component of the phagocyte NADPH oxidase core complex/cytochrome b558 complex, composed of CYBB (heavy chain (beta)) and CYBA (light chain (alpha)). Component of the phagocyte NADPH oxidase complex composed of an obligatory core heterodimer formed by the membrane proteins CYBA and CYBB and the cytosolic regulatory subunits NCF1/p47-phox, NCF2/p67-phox, NCF4/p40-phox and the small GTPase RAC1 or RAC2. Interacts with NCF1 (via SH3 domain). Interacts with SH3PXD2A. Interacts with DUOX1, DUOX2 and TPO. Interacts with NOX4; this interaction mediates superoxide generation. Interacts with calprotectin (S100A8/9). Interacts with GBP7. Interacts with NOXO1. Forms a heterodimer with NOX3 and is essential for activity and cell membrane localization of NOX3. Interacts with NOX1. Phosphorylation at Thr-147 enhances NADPH oxidase activity by promoting NCF1/p47-phox binding. In terms of processing, ubiquitinated at Lys-149 likely by RNF145.

It is found in the cell membrane. Functionally, subunit of NADPH oxidase complexes that is required for the NADPH oxidase activity that generates, in various cell types, superoxide from molecular oxygen utilizing NADPH as an electron donor. Subunit of the phagocyte NADPH oxidase complex that mediates the transfer of electrons from cytosolic NADPH to O2 to produce the superoxide anion (O2(-)). In the activated complex, electrons are first transferred from NADPH to flavin adenine dinucleotide (FAD) and subsequently transferred via two heme molecules to molecular oxygen, producing superoxide through an outer-sphere reaction. Activation of the NADPH oxidase complex is initiated by the assembly of cytosolic subunits of the NADPH oxidase complex with the core NADPH oxidase complex to form a complex at the plasma membrane or phagosomal membrane. This activation process is initiated by phosphorylation dependent binding of the cytosolic NCF1/p47-phox subunit to the C-terminus of CYBA/p22-phox. Aassociates with NOX3 to form a functional NADPH oxidase constitutively generating superoxide. The polypeptide is Cytochrome b-245 light chain (Bison bison (American bison)).